The following is a 120-amino-acid chain: Large ribosomal subunit protein eL8 (120 aa).

The protein belongs to the eukaryotic ribosomal protein eL8 family. Part of the 50S ribosomal subunit. Probably part of the RNase P complex.

Its subcellular location is the cytoplasm. Its function is as follows. Multifunctional RNA-binding protein that recognizes the K-turn motif in ribosomal RNA, the RNA component of RNase P, box H/ACA, box C/D and box C'/D' sRNAs. The chain is Large ribosomal subunit protein eL8 from Natronomonas pharaonis (strain ATCC 35678 / DSM 2160 / CIP 103997 / JCM 8858 / NBRC 14720 / NCIMB 2260 / Gabara) (Halobacterium pharaonis).